A 25-amino-acid polypeptide reads, in one-letter code: Pregnancy-associated glycoprotein 72 (25 aa).

N-linked (GlcNAc...) asparagine glycans are attached at residues N4 and N21.

Belongs to the peptidase A1 family. N-glycosylated. Expressed in chorionic epithelium (trophectoderm).

It localises to the secreted. It is found in the extracellular space. The chain is Pregnancy-associated glycoprotein 72 from Bison bison (American bison).